The sequence spans 423 residues: Lysosomal acid phosphatase (423 aa).

An N-terminal signal peptide occupies residues 1 to 30 (MAGRQSGWSQAALLQFLLGMCLMVMPPIQA). The Lumenal segment spans residues 31–380 (RSLRFVTLLY…QLASDTADTE (350 aa)). Catalysis depends on His42, which acts as the Nucleophile. N-linked (GlcNAc...) asparagine glycans are attached at residues Asn92, Asn133, Asn167, Asn177, Asn191, Asn197, and Asn267. Intrachain disulfides connect Cys159–Cys370, Cys212–Cys310, and Cys345–Cys349. Catalysis depends on Asp287, which acts as the Proton donor. Asn322 and Asn331 each carry an N-linked (GlcNAc...) asparagine glycan. The helical transmembrane segment at 381–401 (VIVALAVCGSILFLLIVLLLT) threads the bilayer. The Cytoplasmic segment spans residues 402 to 423 (VLFRMQAQPPGYHHVADREDHA).

Belongs to the histidine acid phosphatase family. The membrane-bound form is converted to the soluble form by sequential proteolytic processing. First, the C-terminal cytoplasmic tail is removed. Cleavage by a lysosomal protease releases the soluble form in the lysosome lumen.

Its subcellular location is the lysosome membrane. It is found in the lysosome lumen. The enzyme catalyses a phosphate monoester + H2O = an alcohol + phosphate. The polypeptide is Lysosomal acid phosphatase (Acp2) (Rattus norvegicus (Rat)).